A 219-amino-acid polypeptide reads, in one-letter code: 7-cyano-7-deazaguanine synthase (219 aa).

10–20 (FSGGQDSTTCL) is an ATP binding site. Zn(2+) is bound by residues Cys188, Cys196, Cys199, and Cys202.

Belongs to the QueC family. Requires Zn(2+) as cofactor.

It catalyses the reaction 7-carboxy-7-deazaguanine + NH4(+) + ATP = 7-cyano-7-deazaguanine + ADP + phosphate + H2O + H(+). It functions in the pathway purine metabolism; 7-cyano-7-deazaguanine biosynthesis. In terms of biological role, catalyzes the ATP-dependent conversion of 7-carboxy-7-deazaguanine (CDG) to 7-cyano-7-deazaguanine (preQ(0)). The chain is 7-cyano-7-deazaguanine synthase from Neisseria meningitidis serogroup B (strain ATCC BAA-335 / MC58).